Consider the following 330-residue polypeptide: Endochitinase Ziz m 1.0101 (330 aa).

The first 24 residues, 1 to 24, serve as a signal peptide directing secretion; the sequence is MVPQAKLVVASLILTSALIQTSEA. The GH18 domain maps to 26 to 330; sequence GGIATYWGQY…LRTKFMYQNA (305 aa). Intrachain disulfides connect cysteine 47-cysteine 90, cysteine 77-cysteine 80, and cysteine 187-cysteine 219. The binds to IgE in 70% of the 10 patients tested allergic to Indian jujube and latex stretch occupies residues 72–86; sequence NISGHCSDCTFLGEE. Positions 292–301 are binds to IgE in 100% of the 10 patients tested allergic to Indian jujube and latex; sufficient for prediction of the presence of allergic reactions in these patients; the sequence is VWNRYYDLKT. Binds to IgE in 70% of the 10 patients tested allergic to Indian jujube and latex regions lie at residues 300 to 311 and 309 to 320; these read KTNYSSSIILEY and LEYVNSGTKYLP.

The protein belongs to the glycosyl hydrolase 18 family. Chitinase class II subfamily.

The protein resides in the secreted. The enzyme catalyses Random endo-hydrolysis of N-acetyl-beta-D-glucosaminide (1-&gt;4)-beta-linkages in chitin and chitodextrins.. Defense against chitin containing fungal pathogens. This chain is Endochitinase Ziz m 1.0101, found in Ziziphus mauritiana (Indian jujube).